A 32-amino-acid polypeptide reads, in one-letter code: DECFSPGTFCGTKPGLCCSARCFSFFCISLEF.

3 disulfide bridges follow: cysteine 3/cysteine 18, cysteine 10/cysteine 22, and cysteine 17/cysteine 27. 2 positions are modified to 4-hydroxyproline: proline 6 and proline 14.

The protein belongs to the conotoxin O1 superfamily. In terms of tissue distribution, expressed by the venom duct.

The protein resides in the secreted. Delta-conotoxins bind to site 6 of voltage-gated sodium channels (Nav) and inhibit the inactivation process. This toxin acts on Nav1.4/SCN4A and Nav1.6/SCN8A (EC(50)=2.3 uM). The polypeptide is Delta-conotoxin-like CnVIB (Conus consors (Singed cone)).